The following is a 76-amino-acid chain: Conotoxin VnMEKL-012 (76 aa).

An N-terminal signal peptide occupies residues 1-18; it reads MKLTILFLVAAVLMSTQA. The propeptide occupies 19–42; it reads LIQHDGEKSQKAKMKFLTARTLSA. 3 cysteine pairs are disulfide-bonded: cysteine 49–cysteine 65, cysteine 56–cysteine 70, and cysteine 64–cysteine 74.

Belongs to the conotoxin O2 superfamily. In terms of tissue distribution, expressed by the venom duct.

The protein resides in the secreted. In Conus ventricosus (Mediterranean cone), this protein is Conotoxin VnMEKL-012.